The following is a 239-amino-acid chain: Pyridoxine 5'-phosphate synthase (239 aa).

Residue Asn-7 participates in 3-amino-2-oxopropyl phosphate binding. Residue 9–10 (DH) coordinates 1-deoxy-D-xylulose 5-phosphate. Residue Arg-18 participates in 3-amino-2-oxopropyl phosphate binding. The active-site Proton acceptor is the His-43. 1-deoxy-D-xylulose 5-phosphate-binding residues include Arg-45 and His-50. The Proton acceptor role is filled by Glu-70. Residue Thr-100 coordinates 1-deoxy-D-xylulose 5-phosphate. Catalysis depends on His-191, which acts as the Proton donor. Residues Gly-192 and 213 to 214 (GH) each bind 3-amino-2-oxopropyl phosphate.

It belongs to the PNP synthase family. As to quaternary structure, homooctamer; tetramer of dimers.

It localises to the cytoplasm. It catalyses the reaction 3-amino-2-oxopropyl phosphate + 1-deoxy-D-xylulose 5-phosphate = pyridoxine 5'-phosphate + phosphate + 2 H2O + H(+). The protein operates within cofactor biosynthesis; pyridoxine 5'-phosphate biosynthesis; pyridoxine 5'-phosphate from D-erythrose 4-phosphate: step 5/5. Its function is as follows. Catalyzes the complicated ring closure reaction between the two acyclic compounds 1-deoxy-D-xylulose-5-phosphate (DXP) and 3-amino-2-oxopropyl phosphate (1-amino-acetone-3-phosphate or AAP) to form pyridoxine 5'-phosphate (PNP) and inorganic phosphate. The chain is Pyridoxine 5'-phosphate synthase from Pelobacter propionicus (strain DSM 2379 / NBRC 103807 / OttBd1).